The sequence spans 224 residues: Late embryogenesis abundant protein, group 3 (224 aa).

2 disordered regions span residues 1 to 169 (MASN…KDKT) and 193 to 224 (NTLG…TRNH). Residues 13–23 (GETKARNEEKT) are compositionally biased toward basic and acidic residues. A run of 5 repeats spans residues 26 to 36 (VMGATKDKAGQ), 37 to 47 (TTEATKQKAGE), 48 to 58 (TTEATKQKAAE), 59 to 69 (TTEAAKQKASE), and 70 to 80 (TAEATKQKAAE). The tract at residues 26–153 (VMGATKDKAG…TEAAKQKASE (128 aa)) is 12 X 11 AA tandem repeats. Composition is skewed to basic and acidic residues over residues 41–85 (TKQK…KDKT), 92–109 (AKEK…RAAQ), and 120–151 (EKTE…KQKA). Residues 81–87 (AKDKTAQ) form a 6; truncated repeat. Tandem repeats lie at residues 88 to 98 (TAQAAKEKTYE), 99 to 109 (TAQSAKERAAQ), 121 to 131 (KTEAAKQKAAE), 132 to 142 (TTEAARQKAAE), and 143 to 153 (ATEAAKQKASE). Residues 200 to 224 (DNTITTKDNTTGATTKDTTTTTRNH) are compositionally biased toward low complexity.

This sequence belongs to the LEA type 4 family.

The chain is Late embryogenesis abundant protein, group 3 from Triticum aestivum (Wheat).